We begin with the raw amino-acid sequence, 277 residues long: MTQYIPDTQRPIGLFDSGEGGLTVARAVADLLPQENLIYACDTAHFPYGPRPLAEVRAFFRRFMEFFVEQNCKLVIVACNTATAAAIDLLLADAFPIPALGVVQPGAAMAAEASVTGRIGVAATQGTCDSGIYPQTIRLFRPDAYVVQQACPILVIRAEEGVISGPEVRREVERCLAPILAERVDTLVLGCTHFPHMAKVIQDVVGPAVRLVDPGKATAVQVADLLRRRGLLNPGPGPGQRRAFTTGDPQRFLEVACRLWPGGVDAAAHIHLWSQQE.

Substrate contacts are provided by residues 16–17 (DS) and 48–49 (YG). Cys79 (proton donor/acceptor) is an active-site residue. Residue 80–81 (NT) participates in substrate binding. Cys191 serves as the catalytic Proton donor/acceptor. Residue 192 to 193 (TH) participates in substrate binding.

It belongs to the aspartate/glutamate racemases family.

The catalysed reaction is L-glutamate = D-glutamate. Its pathway is cell wall biogenesis; peptidoglycan biosynthesis. Provides the (R)-glutamate required for cell wall biosynthesis. In Symbiobacterium thermophilum (strain DSM 24528 / JCM 14929 / IAM 14863 / T), this protein is Glutamate racemase.